A 411-amino-acid polypeptide reads, in one-letter code: Protein PHLOEM PROTEIN 2-LIKE A5 (411 aa).

In terms of domain architecture, TIR spans 20–157 (TGPQVFINFR…KWTEALFSVC (138 aa)). Residue Glu-94 is part of the active site.

The catalysed reaction is NAD(+) + H2O = ADP-D-ribose + nicotinamide + H(+). In Arabidopsis thaliana (Mouse-ear cress), this protein is Protein PHLOEM PROTEIN 2-LIKE A5 (PP2A5).